The following is a 396-amino-acid chain: Elongation factor Tu (396 aa).

One can recognise a tr-type G domain in the interval 10 to 206; it reads KPHCNIGTIG…AVDAYIPQPE (197 aa). Positions 19–26 are G1; the sequence is GHVDHGKT. 19-26 is a binding site for GTP; that stretch reads GHVDHGKT. Mg(2+) is bound at residue threonine 26. Residues 60 to 64 form a G2 region; sequence GITIS. The tract at residues 81–84 is G3; that stretch reads DCPG. GTP contacts are provided by residues 81 to 85 and 136 to 139; these read DCPGH and NKCD. The interval 136–139 is G4; sequence NKCD. Residues 174–176 are G5; sequence SAL.

It belongs to the TRAFAC class translation factor GTPase superfamily. Classic translation factor GTPase family. EF-Tu/EF-1A subfamily. As to quaternary structure, monomer.

It localises to the cytoplasm. The enzyme catalyses GTP + H2O = GDP + phosphate + H(+). GTP hydrolase that promotes the GTP-dependent binding of aminoacyl-tRNA to the A-site of ribosomes during protein biosynthesis. This chain is Elongation factor Tu, found in Nitrobacter winogradskyi (strain ATCC 25391 / DSM 10237 / CIP 104748 / NCIMB 11846 / Nb-255).